The following is a 245-amino-acid chain: Proteolipid protein DM alpha (245 aa).

4 helical membrane passes run 19–35, 71–87, 117–133, and 204–220; these read LIAT…FCGC, IIYG…VLLL, FIFL…GVFA, and LFIA…IALL.

It belongs to the myelin proteolipid protein family. Highly expressed in white matter in myelinating shark brain.

It is found in the membrane. In Squalus acanthias (Spiny dogfish), this protein is Proteolipid protein DM alpha.